A 613-amino-acid chain; its full sequence is Ectonucleoside triphosphate diphosphohydrolase 4 (613 aa).

Topologically, residues 1-33 (MGRIGISCLFPASWHFSISPVGCPRILNTNLRQ) are cytoplasmic. A helical membrane pass occupies residues 34–54 (IVVISILAAAVSLLYFSVVII). Topologically, residues 55-559 (RSKYGWLSKD…AGHAHWRGVS (505 aa)) are lumenal. The Proton acceptor role is filled by Glu222. A disulfide bridge links Cys368 with Cys395. N-linked (GlcNAc...) asparagine glycosylation is found at Asn404 and Asn407. Cys461 and Cys490 are oxidised to a cystine. A helical transmembrane segment spans residues 560-580 (FVYNHYLFSGCFLVVLLSILL). Residues 581–613 (YLLRLRRIHRRAPRTGSLWMEEGLPSQKGPGPL) are Cytoplasmic-facing.

This sequence belongs to the GDA1/CD39 NTPase family. Requires Ca(2+) as cofactor. Mg(2+) serves as cofactor. Ubiquitous.

The protein resides in the cytoplasmic vesicle. The protein localises to the autophagosome membrane. It is found in the lysosome membrane. It localises to the golgi apparatus membrane. It carries out the reaction a ribonucleoside 5'-triphosphate + H2O = a ribonucleoside 5'-diphosphate + phosphate + H(+). The enzyme catalyses a ribonucleoside 5'-diphosphate + H2O = a ribonucleoside 5'-phosphate + phosphate + H(+). It catalyses the reaction UDP + H2O = UMP + phosphate + H(+). The catalysed reaction is UTP + H2O = UDP + phosphate + H(+). It carries out the reaction CTP + H2O = CDP + phosphate + H(+). The enzyme catalyses GDP + H2O = GMP + phosphate + H(+). It catalyses the reaction 5-methyl-UTP + H2O = 5-methyl-UDP + phosphate + H(+). Its function is as follows. Catalyzes the hydrolysis of nucleoside triphosphates and diphosphates in a calcium- or magnesium-dependent manner, with a preference for pyrimidines. Preferentially hydrolyzes UTP and TTP on UTP and TTP. AMP, ADP, ATP and UMP are not substrates. Preferentially activated by Ca(2+) over Mg(2+). Functionally, has a broad substrate specificity with the ability of cleaving all nucleotide di- and triphosphates with the exception of adenosine di- and triphosphate (ADP and ATP). Preferentially hydrolyzes CTP, UDP, CDP, GTP and GDP. Can use either Ca(2+) or Mg(2+) equally. The sequence is that of Ectonucleoside triphosphate diphosphohydrolase 4 (Entpd4) from Mus musculus (Mouse).